We begin with the raw amino-acid sequence, 872 residues long: Chaperone protein ClpB 2 (872 aa).

One can recognise a Clp R domain in the interval 6 to 148; that stretch reads PNKFTEKAWE…AEIIKQIRGT (143 aa). Repeat regions lie at residues 9-73 and 85-148; these read FTEK…IAQQ and LGRS…IRGT. The interval 161 to 342 is NBD1; it reads ESLEKYGRDL…RRFQEVLVDE (182 aa). ATP is bound at residue 208 to 215; the sequence is GEPGVGKT. Residues 343–551 form a linker region; it reads PNVLDTISIL…IAEIISKWTG (209 aa). A coiled-coil region spans residues 393-527; that stretch reads IDLVDEAAAK…LETQLAEQQT (135 aa). An NBD2 region spans residues 561–772; sequence EKEKLLHLED…RVDETIIFHG (212 aa). 611-618 lines the ATP pocket; the sequence is GPTGVGKT. Residues 773–872 form a C-terminal region; sequence LQKSELRSIV…TSLRGDLVIV (100 aa).

This sequence belongs to the ClpA/ClpB family. In terms of assembly, homohexamer. The oligomerization is ATP-dependent.

The protein resides in the cytoplasm. In terms of biological role, part of a stress-induced multi-chaperone system, it is involved in the recovery of the cell from heat-induced damage, in cooperation with DnaK, DnaJ and GrpE. Acts before DnaK, in the processing of protein aggregates. Protein binding stimulates the ATPase activity; ATP hydrolysis unfolds the denatured protein aggregates, which probably helps expose new hydrophobic binding sites on the surface of ClpB-bound aggregates, contributing to the solubilization and refolding of denatured protein aggregates by DnaK. The chain is Chaperone protein ClpB 2 (clpB2) from Synechocystis sp. (strain ATCC 27184 / PCC 6803 / Kazusa).